A 428-amino-acid polypeptide reads, in one-letter code: Histone deacetylase 3 (428 aa).

The segment at 3–316 (KTVAYFYDPD…WTYETSLLVD (314 aa)) is histone deacetylase. 3 residues coordinate 1D-myo-inositol 1,4,5,6-tetrakisphosphate: His-17, Gly-21, and Lys-25. His-135 is an active-site residue. Zn(2+) is bound by residues Asp-170, His-172, and Asp-259. Arg-265 contributes to the 1D-myo-inositol 1,4,5,6-tetrakisphosphate binding site. 2 stretches are compositionally biased toward basic and acidic residues: residues 386 to 405 (SYER…DNYS) and 415 to 428 (DGDH…DVEI). The segment at 386-428 (SYERTDEPDPEERGSEDNYSRPEASNEFYDGDHDNDKESDVEI) is disordered.

The protein belongs to the histone deacetylase family. HD type 1 subfamily.

It is found in the nucleus. The protein resides in the chromosome. It localises to the cytoplasm. Its subcellular location is the cytosol. The enzyme catalyses N(6)-acetyl-L-lysyl-[histone] + H2O = L-lysyl-[histone] + acetate. It catalyses the reaction N(6)-acetyl-L-lysyl-[protein] + H2O = L-lysyl-[protein] + acetate. It carries out the reaction N(6)-(2E)-butenoyl-L-lysyl-[protein] + H2O = (2E)-2-butenoate + L-lysyl-[protein]. The catalysed reaction is N(6)-(2-hydroxyisobutanoyl)-L-lysyl-[protein] + H2O = 2-hydroxy-2-methylpropanoate + L-lysyl-[protein]. The enzyme catalyses N(6)-[(S)-lactoyl]-L-lysyl-[protein] + H2O = (S)-lactate + L-lysyl-[protein]. With respect to regulation, inositol tetraphosphate (1D-myo-inositol 1,4,5,6-tetrakisphosphate) promotes the histone deacetylase activity by acting as an intermolecular glue between hdac3 and N-Cor repressor complex components. Histone deacetylase that catalyzes the deacetylation of lysine residues on the N-terminal part of the core histones (H2A, H2B, H3 and H4), and some other non-histone substrates. Histone deacetylation gives a tag for epigenetic repression and plays an important role in transcriptional regulation, cell cycle progression and developmental events. Histone deacetylases act via the formation of large multiprotein complexes, such as N-Cor repressor complex, which activate the histone deacetylase activity. Participates in the BCL6 transcriptional repressor activity by deacetylating the H3 'Lys-27' (H3K27) on enhancer elements, antagonizing EP300 acetyltransferase activity and repressing proximal gene expression. Also functions as a deacetylase for non-histone targets. In addition to protein deacetylase activity, also acts as a protein-lysine deacylase by recognizing other acyl groups: catalyzes removal of (2E)-butenoyl (crotonyl), lactoyl (lactyl) and 2-hydroxyisobutanoyl (2-hydroxyisobutyryl) acyl groups from lysine residues, leading to protein decrotonylation, delactylation and de-2-hydroxyisobutyrylation, respectively. The sequence is that of Histone deacetylase 3 (hdac3) from Xenopus tropicalis (Western clawed frog).